A 438-amino-acid polypeptide reads, in one-letter code: 3-phosphoshikimate 1-carboxyvinyltransferase (438 aa).

3-phosphoshikimate-binding residues include Lys25, Ser26, and Arg30. Lys25 provides a ligand contact to phosphoenolpyruvate. Residues Gly99 and Arg128 each coordinate phosphoenolpyruvate. The 3-phosphoshikimate site is built by Ser173, Gln175, Asp325, and Lys352. Residue Gln175 coordinates phosphoenolpyruvate. Asp325 serves as the catalytic Proton acceptor. Phosphoenolpyruvate contacts are provided by Arg356 and Arg398.

It belongs to the EPSP synthase family. In terms of assembly, monomer.

The protein localises to the cytoplasm. It carries out the reaction 3-phosphoshikimate + phosphoenolpyruvate = 5-O-(1-carboxyvinyl)-3-phosphoshikimate + phosphate. It functions in the pathway metabolic intermediate biosynthesis; chorismate biosynthesis; chorismate from D-erythrose 4-phosphate and phosphoenolpyruvate: step 6/7. Its function is as follows. Catalyzes the transfer of the enolpyruvyl moiety of phosphoenolpyruvate (PEP) to the 5-hydroxyl of shikimate-3-phosphate (S3P) to produce enolpyruvyl shikimate-3-phosphate and inorganic phosphate. The chain is 3-phosphoshikimate 1-carboxyvinyltransferase from Prochlorococcus marinus (strain MIT 9515).